The sequence spans 153 residues: SKP1-like protein 5 (153 aa).

Residues 90–153 (MMAANYLNIQ…IREENQWAFQ (64 aa)) form an interaction with the F-box domain of F-box proteins region.

Belongs to the SKP1 family. In terms of assembly, part of a SCF (SKP1-cullin-F-box) protein ligase complex. Interacts with PP2A13. In terms of tissue distribution, restricted to inflorescences, especially in the inflorescence meristem (IM).

It is found in the nucleus. The protein operates within protein modification; protein ubiquitination. In terms of biological role, involved in ubiquitination and subsequent proteasomal degradation of target proteins. Together with CUL1, RBX1 and a F-box protein, it forms a SCF E3 ubiquitin ligase complex. The functional specificity of this complex depends on the type of F-box protein. In the SCF complex, it serves as an adapter that links the F-box protein to CUL1. This chain is SKP1-like protein 5 (ASK5), found in Arabidopsis thaliana (Mouse-ear cress).